Reading from the N-terminus, the 88-residue chain is MAVSAKIEIYTWSTCPFCMRALALLKRKGVEFQEYCIDGDNEAREAMAARANGKRSLPQIFIDDQHIGGCDDIYALDGAGKLDPLLHS.

Cys-15 and Cys-18 form a disulfide bridge.

The protein belongs to the glutaredoxin family.

Functionally, has a glutathione-disulfide oxidoreductase activity in the presence of NADPH and glutathione reductase. Reduces low molecular weight disulfides and proteins. The protein is Probable glutaredoxin ssr2061 of Synechocystis sp. (strain ATCC 27184 / PCC 6803 / Kazusa).